Consider the following 111-residue polypeptide: Phosphoribosyl-ATP pyrophosphatase (111 aa).

This sequence belongs to the PRA-PH family.

The protein localises to the cytoplasm. It catalyses the reaction 1-(5-phospho-beta-D-ribosyl)-ATP + H2O = 1-(5-phospho-beta-D-ribosyl)-5'-AMP + diphosphate + H(+). It participates in amino-acid biosynthesis; L-histidine biosynthesis; L-histidine from 5-phospho-alpha-D-ribose 1-diphosphate: step 2/9. The protein is Phosphoribosyl-ATP pyrophosphatase of Alcanivorax borkumensis (strain ATCC 700651 / DSM 11573 / NCIMB 13689 / SK2).